Consider the following 439-residue polypeptide: FK506-binding protein 59 (439 aa).

2 consecutive PPIase FKBP-type domains span residues 32-120 (GCTV…LGWK) and 149-235 (GAFV…VDCG). 3 TPR repeats span residues 252 to 285 (AKVY…LPTT), 297 to 330 (VATH…DKNN), and 331 to 364 (VKAL…EPGN).

As to quaternary structure, interacts with inaD and trpl, and may be part of the inaD signaling complex. As to expression, expression in the embryo is limited to three tissues: lymph glands, Garland cells and oenocyte cells.

It carries out the reaction [protein]-peptidylproline (omega=180) = [protein]-peptidylproline (omega=0). Functionally, may have a role in phototransduction; inhibits or prevents Ca(2+) induced stimulation of the trpl ion channel. The polypeptide is FK506-binding protein 59 (Drosophila melanogaster (Fruit fly)).